The sequence spans 486 residues: Matrilin-3 (486 aa).

Positions 1–28 are cleaved as a signal peptide; it reads MPRPAPARRLPGLLLLLWPLLLLPSAAP. Residues 32–75 form a disordered region; it reads ARPGFRRLETRGPGGSPGRRPSPAAPDGAPASGTSEPGRARGAG. Over residues 49–64 the composition is skewed to low complexity; that stretch reads GRRPSPAAPDGAPASG. In terms of domain architecture, VWFA spans 83 to 258; that stretch reads DLVFIIDSSR…GVIEKLSSRF (176 aa). Arg198 bears the Omega-N-methylarginine mark. 4 consecutive EGF-like domains span residues 264–305, 306–347, 348–389, and 390–431; these read ALDP…KTCS, ALDR…KTCS, AQDK…KTCS, and VRDK…KTCS. 12 cysteine pairs are disulfide-bonded: Cys268/Cys279, Cys275/Cys289, Cys291/Cys304, Cys310/Cys321, Cys317/Cys331, Cys333/Cys346, Cys352/Cys363, Cys359/Cys373, Cys375/Cys388, Cys394/Cys405, Cys401/Cys415, and Cys417/Cys430. Ser441 is modified (phosphoserine; by FAM20C). Phosphothreonine; by FAM20C is present on Thr442. A coiled-coil region spans residues 456 to 480; the sequence is DKVSSYLQRLNTKLDDILEKLKINE.

In terms of assembly, can form homooligomers (monomers, dimers, trimers and tetramers) and heterooligomers with matrilin-1. Interacts with COMP. Component of a complex containing at least CRELD2, MANF, MATN3 and PDIA4. In terms of tissue distribution, expressed only in cartilaginous tissues, such as vertebrae, ribs and shoulders.

Its subcellular location is the secreted. Major component of the extracellular matrix of cartilage and may play a role in the formation of extracellular filamentous networks. This is Matrilin-3 (MATN3) from Homo sapiens (Human).